Here is a 447-residue protein sequence, read N- to C-terminus: tRNA-2-methylthio-N(6)-dimethylallyladenosine synthase (447 aa).

Residues 10–128 form the MTTase N-terminal domain; that stretch reads KLFCISTYGC…FPEYLHRVLQ (119 aa). Cysteine 19, cysteine 55, cysteine 89, cysteine 165, cysteine 169, and cysteine 172 together coordinate [4Fe-4S] cluster. The Radical SAM core domain maps to 151-382; sequence RKSDVKAFVT…EAINKKVVIK (232 aa). The 64-residue stretch at 384–447 folds into the TRAM domain; sequence KEYEGKVVEV…PFSLIGEIVE (64 aa).

Belongs to the methylthiotransferase family. MiaB subfamily. In terms of assembly, monomer. It depends on [4Fe-4S] cluster as a cofactor.

The protein localises to the cytoplasm. It catalyses the reaction N(6)-dimethylallyladenosine(37) in tRNA + (sulfur carrier)-SH + AH2 + 2 S-adenosyl-L-methionine = 2-methylsulfanyl-N(6)-dimethylallyladenosine(37) in tRNA + (sulfur carrier)-H + 5'-deoxyadenosine + L-methionine + A + S-adenosyl-L-homocysteine + 2 H(+). In terms of biological role, catalyzes the methylthiolation of N6-(dimethylallyl)adenosine (i(6)A), leading to the formation of 2-methylthio-N6-(dimethylallyl)adenosine (ms(2)i(6)A) at position 37 in tRNAs that read codons beginning with uridine. The chain is tRNA-2-methylthio-N(6)-dimethylallyladenosine synthase from Clostridium perfringens (strain ATCC 13124 / DSM 756 / JCM 1290 / NCIMB 6125 / NCTC 8237 / Type A).